Consider the following 269-residue polypeptide: Sororin (269 aa).

Disordered regions lie at residues 1–39, 56–110, and 146–169; these read MSEG…IMKR, VNTG…PKIN, and SLNS…STPN. Residues 57-66 are compositionally biased toward polar residues; the sequence is NTGSQSTPKV. A KEN box motif is present at residues 85 to 87; sequence KEN. A compositionally biased stretch (low complexity) spans 146 to 155; the sequence is SLNSSSSLYS. An FGF motif motif is present at residues 180 to 182; the sequence is FGF. Residues 247–269 are C-terminal Sororin domain; the sequence is LDEWAAFMNAEFEEAEKFDLTVE.

Belongs to the sororin family. As to quaternary structure, interacts with the APC/C complex. Interacts with the chromatin-bound cohesin complex; the interaction is indirect, occurs after DNA replication and requires acetylation of the cohesin component smc3. Interacts (via the FGF motif) with pds5a and pds5b; the interaction is direct and prevents the interaction of pds5a with wapl. Post-translationally, ubiquitinated by the APC/C complex in G1, leading to its degradation.

The protein resides in the nucleus. It is found in the chromosome. Its subcellular location is the cytoplasm. Functionally, regulator of sister chromatid cohesion in mitosis stabilizing cohesin complex association with chromatin. May antagonize the action of wapl which stimulates cohesin dissociation from chromatin. Cohesion ensures that chromosome partitioning is accurate in both meiotic and mitotic cells and plays an important role in DNA repair. Required for efficient DNA double-stranded break repair. This Xenopus laevis (African clawed frog) protein is Sororin (cdca5-a).